A 671-amino-acid chain; its full sequence is Fusexin 1 (671 aa).

Topologically, residues 1 to 12 (MRAVSDFLKNKW) are cytoplasmic. The helical transmembrane segment at 13–33 (VAVPAVALLILSLGFLAQNYI) threads the bilayer. Topologically, residues 34–574 (TGSFVSGDQI…DPFCADGPLE (541 aa)) are extracellular. Intrachain disulfides connect Cys-145–Cys-180, Cys-409–Cys-452, Cys-480–Cys-500, and Cys-513–Cys-528. A fusion loop region spans residues 168 to 173 (GAIADY). A helical membrane pass occupies residues 575–595 (MLSKMFHLVAGTAVAFFTGSL). Topologically, residues 596-628 (GYRAGRWVDGEYQIKGGFDPLKSRSVSRAKRGR) are cytoplasmic. The chain crosses the membrane as a helical span at residues 629-649 (FLIGLIAELVSFLLGFYVILL). A topological domain (extracellular) is located at residue Val-650. A helical transmembrane segment spans residues 651–671 (PIWAQLMVILGYVLFKYYTPF).

Belongs to the HAP2/GCS1 family. Fusexin 1 subfamily. As to quaternary structure, homotrimer stabilized by interdomain contacts and numerous Ca(2+) and Na(+) ions.

It localises to the cell surface. The protein resides in the cell membrane. In terms of biological role, exhibits fusogenic activity. Mediates cell-cell fusion in mammalian cells (bilateral fusion). In Natrinema altunense (strain JCM 12890 / CGMCC 1.3731 / AJ2), this protein is Fusexin 1.